We begin with the raw amino-acid sequence, 202 residues long: Cytochrome c oxidase assembly protein CtaG (202 aa).

At 1–14 (MSENAGTPKKQGRN) the chain is on the cytoplasmic side. The helical; Signal-anchor for type II membrane protein transmembrane segment at 15–37 (NGAVVMMCLSFVFGMGAMSYAAV) threads the bilayer. Residues 38 to 202 (PLYRIFCQVT…GGAEKIEKKL (165 aa)) are Periplasmic-facing.

Belongs to the COX11/CtaG family.

It is found in the cell inner membrane. Exerts its effect at some terminal stage of cytochrome c oxidase synthesis, probably by being involved in the insertion of the copper B into subunit I. This Rhizobium johnstonii (strain DSM 114642 / LMG 32736 / 3841) (Rhizobium leguminosarum bv. viciae) protein is Cytochrome c oxidase assembly protein CtaG.